Consider the following 192-residue polypeptide: Phosphomevalonate kinase (192 aa).

ATP-binding positions include 17–23 and Arg-141; that span reads KRKSGKD. Asn-170 provides a ligand contact to substrate. ATP is bound by residues His-171 and Gln-180.

In terms of assembly, monomer.

The protein resides in the cytoplasm. Its subcellular location is the cytosol. The enzyme catalyses (R)-5-phosphomevalonate + ATP = (R)-5-diphosphomevalonate + ADP. It functions in the pathway isoprenoid biosynthesis; isopentenyl diphosphate biosynthesis via mevalonate pathway; isopentenyl diphosphate from (R)-mevalonate: step 2/3. Catalyzes the reversible ATP-dependent phosphorylation of mevalonate 5-phosphate to produce mevalonate diphosphate and ADP, a key step in the mevalonic acid mediated biosynthesis of isopentenyl diphosphate and other polyisoprenoid metabolites. This Bos taurus (Bovine) protein is Phosphomevalonate kinase (PMVK).